Reading from the N-terminus, the 320-residue chain is Short-chain dehydrogenase TIC 32 A, chloroplastic (320 aa).

Residues 40-46 (GGTSGIG), 92-93 (DL), N119, and T140 each bind NADP(+). Residue S174 coordinates substrate. Y196 functions as the Proton acceptor in the catalytic mechanism. The tract at residues 301 to 317 (DTTLADKLWDFSIKLVE) is interaction with calmodulin.

It belongs to the short-chain dehydrogenases/reductases (SDR) family. As to quaternary structure, part of the Tic complex. Expressed in the dehiscence zone of developing pods.

It is found in the plastid. The protein localises to the chloroplast inner membrane. In terms of biological role, involved in protein precursor import into chloroplasts. Maybe involved in pod abscission or dehiscence (pod shatter). The sequence is that of Short-chain dehydrogenase TIC 32 A, chloroplastic from Brassica napus (Rape).